A 332-amino-acid chain; its full sequence is 2,3-diketo-L-gulonate reductase (332 aa).

Histidine 44 acts as the Proton donor in catalysis. Residues 168 to 174, 224 to 225, and 304 to 306 contribute to the NAD(+) site; these read ITMVDMS, WK, and GHE.

The protein belongs to the LDH2/MDH2 oxidoreductase family. DlgD subfamily. Homodimer.

It localises to the cytoplasm. It catalyses the reaction 3-dehydro-L-gulonate + NAD(+) = 2,3-dioxo-L-gulonate + NADH + H(+). The enzyme catalyses 3-dehydro-L-gulonate + NADP(+) = 2,3-dioxo-L-gulonate + NADPH + H(+). Its function is as follows. Catalyzes the reduction of 2,3-diketo-L-gulonate in the presence of NADH, to form 3-keto-L-gulonate. In Escherichia fergusonii (strain ATCC 35469 / DSM 13698 / CCUG 18766 / IAM 14443 / JCM 21226 / LMG 7866 / NBRC 102419 / NCTC 12128 / CDC 0568-73), this protein is 2,3-diketo-L-gulonate reductase.